The sequence spans 107 residues: UPF0145 protein CKO_02237 (107 aa).

Belongs to the UPF0145 family.

This Citrobacter koseri (strain ATCC BAA-895 / CDC 4225-83 / SGSC4696) protein is UPF0145 protein CKO_02237.